Here is a 510-residue protein sequence, read N- to C-terminus: Glycerol kinase (510 aa).

T13 is a binding site for ADP. T13 and T14 together coordinate ATP. T13 contributes to the sn-glycerol 3-phosphate binding site. R17 is a binding site for ADP. Residues R83, E84, Y135, and D255 each coordinate sn-glycerol 3-phosphate. Glycerol-binding residues include R83, E84, Y135, D255, and Q256. Positions 277, 321, 421, and 425 each coordinate ADP. The ATP site is built by T277, G321, and G421.

The protein belongs to the FGGY kinase family.

The catalysed reaction is glycerol + ATP = sn-glycerol 3-phosphate + ADP + H(+). Its pathway is polyol metabolism; glycerol degradation via glycerol kinase pathway; sn-glycerol 3-phosphate from glycerol: step 1/1. Functionally, key enzyme in the regulation of glycerol uptake and metabolism. Catalyzes the phosphorylation of glycerol to yield sn-glycerol 3-phosphate. The polypeptide is Glycerol kinase (Halobacterium salinarum (strain ATCC 29341 / DSM 671 / R1)).